Reading from the N-terminus, the 129-residue chain is C-phycocyanin beta subunit (129 aa).

N62 bears the N4-methylasparagine mark. Residue C116 coordinates (2R,3E)-phycocyanobilin.

This sequence belongs to the phycobiliprotein family. Heterodimer of an alpha and a beta subunit, which further assembles into trimers and the trimers into hexamers. In terms of processing, two isomers exist. Contains two covalently linked bilin chromophores.

The protein resides in the cellular thylakoid membrane. Functionally, light-harvesting photosynthetic bile pigment-protein from the phycobiliprotein complex (phycobilisome, PBS). Phycocyanin is the major phycobiliprotein in the PBS rod. This chain is C-phycocyanin beta subunit, found in Aphanizomenon flos-aquae.